The chain runs to 454 residues: MEMEEVLSEVIQRIRPSDEERAFVKGLMEELRTIAEERIEELGLDARPYFVGSLAKDTYLAGDHDIDLFLAFPLETPLEELRKKGLELGKAIAEKLDSHEIAYAEHPYVRARYRGVRVDLVPCYDVGNWRDVRTAVDRSILHTRWVNENLRGRNDEVRLLKRFLKGINAYGSEIYVRGFSGYLAEILVIKYGSFLDVVEKADFLLRQKIIDPENWLRKEPEVALKTVKRETEEDRPLIVIDPVDPRRNVSANLSWEKYGRFYFKSIEFLENPSVGFFFPPEKPKGSYLDELRKRGTALVTLLINVPDMVDDVLLPQLERSARGFERTLEREGFGVLGWDVGRKGRAFIMLELDRERRERVKIKPGPEFFTERGRDFYRKNEKVWLIGKRLYSEKLVRESVVDVIIELLEKNQVSLGKGIRDAIRRADILLNYVPKELEEEAYLFLSREKWNIKG.

Ser-53 and Lys-56 together coordinate ATP. The CTP site is built by Ser-53 and Lys-56. The Mg(2+) site is built by Asp-65, Asp-67, and Asp-119. Positions 142, 161, and 170 each coordinate ATP. CTP is bound by residues His-142, Lys-161, and Tyr-170.

It belongs to the tRNA nucleotidyltransferase/poly(A) polymerase family. Archaeal CCA-adding enzyme subfamily. As to quaternary structure, homodimer. Mg(2+) is required as a cofactor.

The enzyme catalyses a tRNA precursor + 2 CTP + ATP = a tRNA with a 3' CCA end + 3 diphosphate. It carries out the reaction a tRNA with a 3' CCA end + 2 CTP + ATP = a tRNA with a 3' CCACCA end + 3 diphosphate. Functionally, catalyzes the addition and repair of the essential 3'-terminal CCA sequence in tRNAs without using a nucleic acid template. Adds these three nucleotides in the order of C, C, and A to the tRNA nucleotide-73, using CTP and ATP as substrates and producing inorganic pyrophosphate. tRNA 3'-terminal CCA addition is required both for tRNA processing and repair. Also involved in tRNA surveillance by mediating tandem CCA addition to generate a CCACCA at the 3' terminus of unstable tRNAs. While stable tRNAs receive only 3'-terminal CCA, unstable tRNAs are marked with CCACCA and rapidly degraded. In Thermococcus gammatolerans (strain DSM 15229 / JCM 11827 / EJ3), this protein is CCA-adding enzyme.